The sequence spans 537 residues: CTP synthase (537 aa).

The segment at 1-265 (MTKFIFVTGG…GKYLIKRLKL (265 aa)) is amidoligase domain. Ser-13 is a binding site for CTP. Ser-13 is a UTP binding site. 14–19 (GLGKGI) contacts ATP. Tyr-54 provides a ligand contact to L-glutamine. Asp-71 provides a ligand contact to ATP. 2 residues coordinate Mg(2+): Asp-71 and Glu-139. CTP-binding positions include 146 to 148 (DIE), 186 to 191 (KTKPTQ), and Lys-222. UTP-binding positions include 186–191 (KTKPTQ) and Lys-222. In terms of domain architecture, Glutamine amidotransferase type-1 spans 290–532 (EIAIVGKYVK…VRAAKEYKQE (243 aa)). Residue Gly-351 coordinates L-glutamine. Catalysis depends on Cys-378, which acts as the Nucleophile; for glutamine hydrolysis. Residues 379-382 (FGFQ), Glu-402, and Arg-459 contribute to the L-glutamine site. Catalysis depends on residues His-505 and Glu-507.

This sequence belongs to the CTP synthase family. As to quaternary structure, homotetramer.

It catalyses the reaction UTP + L-glutamine + ATP + H2O = CTP + L-glutamate + ADP + phosphate + 2 H(+). It carries out the reaction L-glutamine + H2O = L-glutamate + NH4(+). The catalysed reaction is UTP + NH4(+) + ATP = CTP + ADP + phosphate + 2 H(+). Its pathway is pyrimidine metabolism; CTP biosynthesis via de novo pathway; CTP from UDP: step 2/2. Allosterically activated by GTP, when glutamine is the substrate; GTP has no effect on the reaction when ammonia is the substrate. The allosteric effector GTP functions by stabilizing the protein conformation that binds the tetrahedral intermediate(s) formed during glutamine hydrolysis. Inhibited by the product CTP, via allosteric rather than competitive inhibition. Catalyzes the ATP-dependent amination of UTP to CTP with either L-glutamine or ammonia as the source of nitrogen. Regulates intracellular CTP levels through interactions with the four ribonucleotide triphosphates. This Pyrococcus horikoshii (strain ATCC 700860 / DSM 12428 / JCM 9974 / NBRC 100139 / OT-3) protein is CTP synthase.